The chain runs to 171 residues: 3-hydroxydecanoyl-[acyl-carrier-protein] dehydratase (171 aa).

The active site involves His70.

This sequence belongs to the thioester dehydratase family. FabA subfamily. Homodimer.

It localises to the cytoplasm. It catalyses the reaction a (3R)-hydroxyacyl-[ACP] = a (2E)-enoyl-[ACP] + H2O. The catalysed reaction is (3R)-hydroxydecanoyl-[ACP] = (2E)-decenoyl-[ACP] + H2O. It carries out the reaction (2E)-decenoyl-[ACP] = (3Z)-decenoyl-[ACP]. It functions in the pathway lipid metabolism; fatty acid biosynthesis. In terms of biological role, necessary for the introduction of cis unsaturation into fatty acids. Catalyzes the dehydration of (3R)-3-hydroxydecanoyl-ACP to E-(2)-decenoyl-ACP and then its isomerization to Z-(3)-decenoyl-ACP. Can catalyze the dehydratase reaction for beta-hydroxyacyl-ACPs with saturated chain lengths up to 16:0, being most active on intermediate chain length. The chain is 3-hydroxydecanoyl-[acyl-carrier-protein] dehydratase from Colwellia psychrerythraea (strain 34H / ATCC BAA-681) (Vibrio psychroerythus).